Reading from the N-terminus, the 459-residue chain is Vicilin (459 aa).

The first 28 residues, 1–28, serve as a signal peptide directing secretion; the sequence is MAATTMKASFPLLMLMGISFLASVCVSS. A Cupin type-1 1 domain is found at 36-194; that stretch reads FIFKSNKFQT…SFNTDYEEIE (159 aa). 3 disordered regions span residues 235 to 258, 321 to 346, and 430 to 459; these read LSKN…NLRS, ELVG…QGEE, and ENQK…LSSV. Residues 238 to 251 show a composition bias toward low complexity; that stretch reads NAKSTSKKSVSSES. A Cupin type-1 2 domain is found at 254 to 426; it reads FNLRSRGPIY…AFPGSAQEVD (173 aa). Residues 337–346 are compositionally biased toward acidic residues; sequence DDEEEEQGEE. Residues 444–459 show a composition bias toward basic and acidic residues; the sequence is QRERGSRETRDRLSSV.

It belongs to the 7S seed storage protein family.

The protein resides in the vacuole. The protein localises to the aleurone grain. Seed storage protein. This Pisum sativum (Garden pea) protein is Vicilin.